The primary structure comprises 141 residues: ATP synthase epsilon chain (141 aa).

The protein belongs to the ATPase epsilon chain family. As to quaternary structure, F-type ATPases have 2 components, CF(1) - the catalytic core - and CF(0) - the membrane proton channel. CF(1) has five subunits: alpha(3), beta(3), gamma(1), delta(1), epsilon(1). CF(0) has three main subunits: a, b and c.

It localises to the cell inner membrane. Its function is as follows. Produces ATP from ADP in the presence of a proton gradient across the membrane. The sequence is that of ATP synthase epsilon chain from Bordetella avium (strain 197N).